Consider the following 242-residue polypeptide: Triosephosphate isomerase (242 aa).

Substrate is bound at residue 9 to 11; it reads NWK. Catalysis depends on histidine 90, which acts as the Electrophile. Glutamate 162 serves as the catalytic Proton acceptor. Substrate-binding positions include glycine 168, serine 205, and 226 to 227; that span reads GG.

This sequence belongs to the triosephosphate isomerase family. In terms of assembly, homodimer.

The protein resides in the cytoplasm. It catalyses the reaction D-glyceraldehyde 3-phosphate = dihydroxyacetone phosphate. Its pathway is carbohydrate biosynthesis; gluconeogenesis. The protein operates within carbohydrate degradation; glycolysis; D-glyceraldehyde 3-phosphate from glycerone phosphate: step 1/1. Involved in the gluconeogenesis. Catalyzes stereospecifically the conversion of dihydroxyacetone phosphate (DHAP) to D-glyceraldehyde-3-phosphate (G3P). This Azoarcus sp. (strain BH72) protein is Triosephosphate isomerase.